Consider the following 275-residue polypeptide: 4,5-DOPA dioxygenase extradiol 1 (275 aa).

Zn(2+)-binding residues include His22, His60, His182, and His236.

It belongs to the DODA-type extradiol aromatic ring-opening dioxygenase family. Requires Zn(2+) as cofactor.

The catalysed reaction is L-dopa + O2 = 4-(L-alanin-3-yl)-2-hydroxy-cis,cis-muconate 6-semialdehyde + H(+). It participates in pigment biosynthesis; betalain biosynthesis. In terms of biological role, opens the cyclic ring of dihydroxy-phenylalanine (DOPA) between carbons 4 and 5, thus producing an unstable seco-DOPA that rearranges nonenzymatically to betalamic acid. This is 4,5-DOPA dioxygenase extradiol 1 from Beta vulgaris (Sugar beet).